We begin with the raw amino-acid sequence, 1065 residues long: Ceruloplasmin (1065 aa).

An N-terminal signal peptide occupies residues 1-19; sequence MKILILGIFLFLCSTPAWA. 2 Plastocyanin-like domains span residues 20-200 and 209-357; these read KEKH…LIIC and KEKH…VQEC. Y55, G64, and Y67 together coordinate Na(+). Cu(2+)-binding residues include H120 and H122. H120 contacts O2. Ca(2+) is bound at residue K128. N138 is a glycosylation site (N-linked (GlcNAc...) (complex) asparagine). Ca(2+) contacts are provided by Q143, D146, and D147. C174 and C200 are oxidised to a cystine. Cu(2+) contacts are provided by H180 and H182. An O2-binding site is contributed by H180. Na(+) is bound at residue S256. An intrachain disulfide couples C276 to C357. Cu(2+) is bound by residues H295, C338, and H343. N358 and N397 each carry an N-linked (GlcNAc...) (complex) asparagine glycan. 2 consecutive Plastocyanin-like domains span residues 370–560 and 570–718; these read HVRH…MKIC and RQKD…VNQC. Positions 408, 417, and 420 each coordinate Na(+). A disulfide bridge links C534 with C560. N588 is a glycosylation site (N-linked (GlcNAc...) asparagine). S617 serves as a coordination point for Na(+). C637 and C718 are oxidised to a cystine. H656, C699, H704, and M709 together coordinate Cu(2+). C699 acts as the Nucleophile; for glutathione peroxidase activity in catalysis. S722 is modified (phosphoserine; by FAM20C). 2 consecutive Plastocyanin-like domains span residues 730 to 900 and 908 to 1061; these read GERT…LIVC and FNPR…QNED. N-linked (GlcNAc...) (complex) asparagine glycosylation occurs at N762. Na(+) contacts are provided by F767, G776, and Y779. C874 and C900 form a disulfide bridge. N926 is a glycosylation site (N-linked (GlcNAc...) asparagine). S955 serves as a coordination point for Na(+). Residues H994, H997, H999, H1039, C1040, H1041, H1045, and M1050 each coordinate Cu(2+). The O2 site is built by H997 and H999. Position 1041 (H1041) interacts with O2.

The protein belongs to the multicopper oxidase family. Found in a complex with MPO and LTF; interacts directly with MPO and LTF, which allows Fe(3+) incorporation into LTF, activation of CP ferroxidase activity and protection of CP antioxidant properties by MPO. Cu(2+) serves as cofactor. As to expression, expressed by the liver and secreted in plasma.

The protein localises to the secreted. It carries out the reaction 4 Fe(2+) + O2 + 4 H(+) = 4 Fe(3+) + 2 H2O. The enzyme catalyses 4 Cu(+) + O2 + 4 H(+) = 4 Cu(2+) + 2 H2O. It catalyses the reaction a hydroperoxide + 2 glutathione = an alcohol + glutathione disulfide + H2O. The catalysed reaction is 4 nitric oxide + O2 + 2 H2O = 4 nitrite + 4 H(+). It carries out the reaction 2 glutathione + H2O2 = glutathione disulfide + 2 H2O. In terms of biological role, multifunctional blue, copper-binding (6-7 atoms per molecule) glycoprotein. It has ferroxidase activity oxidizing Fe(2+) to Fe(3+) without releasing radical oxygen species. It is involved in iron transport across the cell membrane. Copper ions provide a large number of enzymatic activites. Oxidizes highly toxic ferrous ions to the ferric state for further incorporation onto apo-transferrins, catalyzes Cu(+) oxidation and promotes the oxidation of biogenic amines such as norepinephrin and serotonin. Provides Cu(2+) ions for the ascorbate-mediated deaminase degradation of the heparan sulfate chains of GPC1. Has glutathione peroxidase-like activity, can remove both hydrogen peroxide and lipid hydroperoxide in the presence of thiols. Also shows NO-oxidase and NO2 synthase activities that determine endocrine NO homeostasis. This Homo sapiens (Human) protein is Ceruloplasmin.